Consider the following 209-residue polypeptide: Ribosomal RNA large subunit methyltransferase E (209 aa).

5 residues coordinate S-adenosyl-L-methionine: glycine 63, tryptophan 65, aspartate 83, aspartate 99, and aspartate 124. Lysine 164 serves as the catalytic Proton acceptor.

It belongs to the class I-like SAM-binding methyltransferase superfamily. RNA methyltransferase RlmE family.

It localises to the cytoplasm. The enzyme catalyses uridine(2552) in 23S rRNA + S-adenosyl-L-methionine = 2'-O-methyluridine(2552) in 23S rRNA + S-adenosyl-L-homocysteine + H(+). Functionally, specifically methylates the uridine in position 2552 of 23S rRNA at the 2'-O position of the ribose in the fully assembled 50S ribosomal subunit. The sequence is that of Ribosomal RNA large subunit methyltransferase E from Tolumonas auensis (strain DSM 9187 / NBRC 110442 / TA 4).